The sequence spans 479 residues: MNFETIIGLEVHVELNTNSKIFSPSSAHFGQEANANTNVIDWSFPGVLPVINKGVIDAGIKAALALNMDIHKKMHFDRKNYFYPDNPKAYQISQFDEPIGFNGWIDITLEDGTSKKIRIERAHLEEDAGKNTHGTDGYSYVDLNRQGVPLIEIVSEADMRSPEEAYAYLTALKEIIQYTGISDVKMEEGSMRVDANISLRPYGQKEFGTKTELKNLNSFSNVRKGLEFEVERQAKVLRSGGVIRQETRRYDEASKGTILMRVKEGAADYRYFPEPDLPLYEIDDVWIEEMRHELPQFPAQRRATYINDLGLSSYDANQLTATKAMSDFFEKAVALGGDAKQVSNWLQGEVAQYLNAEGKAIQEISLTPANLVEMIGIIADGTISSKIAKKVFVHLAKNGGSAREYVEKAGLVQISDPDVLIPIIHRVFEEQEAAVVDFKSGKRNADKAFTGFLMKATKGQANPQVAQQLLAQELQKLLD.

Belongs to the GatB/GatE family. GatB subfamily. As to quaternary structure, heterotrimer of A, B and C subunits.

It catalyses the reaction L-glutamyl-tRNA(Gln) + L-glutamine + ATP + H2O = L-glutaminyl-tRNA(Gln) + L-glutamate + ADP + phosphate + H(+). It carries out the reaction L-aspartyl-tRNA(Asn) + L-glutamine + ATP + H2O = L-asparaginyl-tRNA(Asn) + L-glutamate + ADP + phosphate + 2 H(+). Functionally, allows the formation of correctly charged Asn-tRNA(Asn) or Gln-tRNA(Gln) through the transamidation of misacylated Asp-tRNA(Asn) or Glu-tRNA(Gln) in organisms which lack either or both of asparaginyl-tRNA or glutaminyl-tRNA synthetases. The reaction takes place in the presence of glutamine and ATP through an activated phospho-Asp-tRNA(Asn) or phospho-Glu-tRNA(Gln). This Streptococcus uberis (strain ATCC BAA-854 / 0140J) protein is Aspartyl/glutamyl-tRNA(Asn/Gln) amidotransferase subunit B.